Consider the following 68-residue polypeptide: DNA-directed RNA polymerase subunit omega (68 aa).

This sequence belongs to the RNA polymerase subunit omega family. In terms of assembly, the RNAP catalytic core consists of 2 alpha, 1 beta, 1 beta' and 1 omega subunit. When a sigma factor is associated with the core the holoenzyme is formed, which can initiate transcription.

It catalyses the reaction RNA(n) + a ribonucleoside 5'-triphosphate = RNA(n+1) + diphosphate. In terms of biological role, promotes RNA polymerase assembly. Latches the N- and C-terminal regions of the beta' subunit thereby facilitating its interaction with the beta and alpha subunits. The chain is DNA-directed RNA polymerase subunit omega from Ruminiclostridium cellulolyticum (strain ATCC 35319 / DSM 5812 / JCM 6584 / H10) (Clostridium cellulolyticum).